Reading from the N-terminus, the 116-residue chain is Protein Wnt-5a (116 aa).

Serine 1 carries O-palmitoleoyl serine; by PORCN lipidation. N-linked (GlcNAc...) asparagine glycans are attached at residues asparagine 69 and asparagine 83. Cysteines 82 and 97 form a disulfide.

The protein belongs to the Wnt family. Palmitoleoylation is required for efficient binding to frizzled receptors. Depalmitoleoylation leads to Wnt signaling pathway inhibition.

It is found in the secreted. Its subcellular location is the extracellular space. The protein resides in the extracellular matrix. Ligand for members of the frizzled family of seven transmembrane receptors. Can activate or inhibit canonical Wnt signaling, depending on receptor context. Required during embryogenesis for extension of the primary anterior-posterior axis. This is Protein Wnt-5a (WNT-5A) from Plestiodon skiltonianus (Western skink).